We begin with the raw amino-acid sequence, 369 residues long: Cytoplasmic tRNA 2-thiolation protein 1 (369 aa).

This sequence belongs to the TtcA family. CTU1/NCS6/ATPBD3 subfamily.

The protein resides in the cytoplasm. It functions in the pathway tRNA modification; 5-methoxycarbonylmethyl-2-thiouridine-tRNA biosynthesis. Its function is as follows. Plays a central role in 2-thiolation of mcm(5)S(2)U at tRNA wobble positions of tRNA(Lys), tRNA(Glu) and tRNA(Gln). Directly binds tRNAs and probably acts by catalyzing adenylation of tRNAs, an intermediate required for 2-thiolation. It is unclear whether it acts as a sulfurtransferase that transfers sulfur from thiocarboxylated URM1 onto the uridine of tRNAs at wobble position. Prior mcm(5) tRNA modification by the elongator complex is required for 2-thiolation. May also be involved in protein urmylation. This is Cytoplasmic tRNA 2-thiolation protein 1 from Cryptococcus neoformans var. neoformans serotype D (strain JEC21 / ATCC MYA-565) (Filobasidiella neoformans).